Consider the following 284-residue polypeptide: Putative L-ribulose-5-phosphate 3-epimerase UlaE (284 aa).

The protein belongs to the L-ribulose-5-phosphate 3-epimerase family.

The enzyme catalyses L-ribulose 5-phosphate = L-xylulose 5-phosphate. It functions in the pathway cofactor degradation; L-ascorbate degradation; D-xylulose 5-phosphate from L-ascorbate: step 3/4. Catalyzes the isomerization of L-xylulose-5-phosphate to L-ribulose-5-phosphate. Is involved in the anaerobic L-ascorbate utilization. This is Putative L-ribulose-5-phosphate 3-epimerase UlaE from Shigella dysenteriae serotype 1 (strain Sd197).